The chain runs to 593 residues: Methylenetetrahydrofolate reductase (NADH) 1 (593 aa).

Glu21 (proton donor/acceptor) is an active-site residue. NAD(+)-binding positions include 21–26 (EYFPPK) and 52–53 (TW). Residues 52–53 (TW), His81, 111–113 (RGD), Tyr153, 157–160 (HPDA), Asp175, and Lys182 each bind FAD. Asp113 contacts substrate. Residues Gln193 and Tyr285 each coordinate substrate.

Belongs to the methylenetetrahydrofolate reductase family. Homodimer. Requires FAD as cofactor.

The catalysed reaction is (6S)-5-methyl-5,6,7,8-tetrahydrofolate + NAD(+) = (6R)-5,10-methylene-5,6,7,8-tetrahydrofolate + NADH + H(+). The protein operates within one-carbon metabolism; tetrahydrofolate interconversion. Its activity is regulated as follows. Plant MTHFRs strongly prefer NADH over NADPH. Not inhibited by methionine or S-adenosylmethionine. Functionally, the probable reversibility of the MTHFR reaction in plants suggests that they can metabolize the methyl group of 5,10-methylenetetrahydrofolate to serine, sugars and starch. This chain is Methylenetetrahydrofolate reductase (NADH) 1, found in Zea mays (Maize).